Here is a 297-residue protein sequence, read N- to C-terminus: N-acetylneuraminate lyase (297 aa).

Serine 47 and threonine 48 together coordinate aceneuramate. Tyrosine 137 (proton donor) is an active-site residue. Lysine 165 functions as the Schiff-base intermediate with substrate in the catalytic mechanism. Aceneuramate is bound by residues threonine 167, glycine 189, aspartate 191, glutamate 192, and serine 208.

It belongs to the DapA family. NanA subfamily. In terms of assembly, homotetramer.

The protein resides in the cytoplasm. It carries out the reaction aceneuramate = aldehydo-N-acetyl-D-mannosamine + pyruvate. Its pathway is amino-sugar metabolism; N-acetylneuraminate degradation; D-fructose 6-phosphate from N-acetylneuraminate: step 1/5. Catalyzes the reversible aldol cleavage of N-acetylneuraminic acid (sialic acid; Neu5Ac) to form pyruvate and N-acetylmannosamine (ManNAc) via a Schiff base intermediate. The protein is N-acetylneuraminate lyase of Shigella boydii serotype 4 (strain Sb227).